Here is a 91-residue protein sequence, read N- to C-terminus: Teretoxin Tan6.2 (91 aa).

The N-terminal stretch at 1-21 is a signal peptide; it reads MATSGRLLCVCLVLGLVFGSL. Positions 22–50 are excised as a propeptide; sequence GYPVMEKKRAGKNFDLGTIANWAWQIGEK.

This sequence belongs to the teretoxin M (TM) superfamily. In terms of processing, contains 3 disulfide bonds. As to expression, expressed by the venom duct.

The protein resides in the secreted. The polypeptide is Teretoxin Tan6.2 (Terebra anilis (Auger snail)).